A 295-amino-acid chain; its full sequence is Ribosomal protein L11 methyltransferase (295 aa).

4 residues coordinate S-adenosyl-L-methionine: threonine 146, glycine 167, aspartate 189, and asparagine 231.

It belongs to the methyltransferase superfamily. PrmA family.

It is found in the cytoplasm. The enzyme catalyses L-lysyl-[protein] + 3 S-adenosyl-L-methionine = N(6),N(6),N(6)-trimethyl-L-lysyl-[protein] + 3 S-adenosyl-L-homocysteine + 3 H(+). Methylates ribosomal protein L11. The polypeptide is Ribosomal protein L11 methyltransferase (Vibrio vulnificus (strain YJ016)).